The sequence spans 337 residues: 6-phosphogluconolactonase (337 aa).

This sequence belongs to the cycloisomerase 2 family.

The enzyme catalyses 6-phospho-D-glucono-1,5-lactone + H2O = 6-phospho-D-gluconate + H(+). It functions in the pathway carbohydrate degradation; pentose phosphate pathway; D-ribulose 5-phosphate from D-glucose 6-phosphate (oxidative stage): step 2/3. Its function is as follows. Catalyzes the hydrolysis of 6-phosphogluconolactone to 6-phosphogluconate. This Blochmanniella pennsylvanica (strain BPEN) protein is 6-phosphogluconolactonase.